The following is a 141-amino-acid chain: Pheromone-binding protein-related protein 6 (141 aa).

Residues Met1–Ala16 form the signal peptide. Disulfide bonds link Cys41/Cys72, Cys68/Cys120, and Cys111/Cys129.

The protein belongs to the PBP/GOBP family. Antenna. Mostly expressed in two types of sensory hairs, sensilla trichodea and small sensilla basiconica, in the ventro-lateral region of the third antennal segment (at protein level).

Its subcellular location is the secreted. The polypeptide is Pheromone-binding protein-related protein 6 (Obp83b) (Drosophila melanogaster (Fruit fly)).